Consider the following 273-residue polypeptide: uncharacterized protein (273 aa).

This sequence belongs to the AtsA family.

This is an uncharacterized protein from Mycobacterium tuberculosis (strain CDC 1551 / Oshkosh).